The sequence spans 280 residues: Acyl-[acyl-carrier-protein]--UDP-N-acetylglucosamine O-acyltransferase (280 aa).

This sequence belongs to the transferase hexapeptide repeat family. LpxA subfamily. Homotrimer.

The protein resides in the cytoplasm. It catalyses the reaction a (3R)-hydroxyacyl-[ACP] + UDP-N-acetyl-alpha-D-glucosamine = a UDP-3-O-[(3R)-3-hydroxyacyl]-N-acetyl-alpha-D-glucosamine + holo-[ACP]. Its pathway is glycolipid biosynthesis; lipid IV(A) biosynthesis; lipid IV(A) from (3R)-3-hydroxytetradecanoyl-[acyl-carrier-protein] and UDP-N-acetyl-alpha-D-glucosamine: step 1/6. Its function is as follows. Involved in the biosynthesis of lipid A, a phosphorylated glycolipid that anchors the lipopolysaccharide to the outer membrane of the cell. This is Acyl-[acyl-carrier-protein]--UDP-N-acetylglucosamine O-acyltransferase from Chlamydia trachomatis serovar A (strain ATCC VR-571B / DSM 19440 / HAR-13).